Here is a 477-residue protein sequence, read N- to C-terminus: Iroquois homeobox protein 6a (477 aa).

The segment at residues 148–210 (GSTRRKNATR…NARRRLKKEN (63 aa)) is a DNA-binding region (homeobox). Disordered stretches follow at residues 209–282 (ENKM…PDIP) and 303–323 (DYLDHLGSKPQQQQPSPQSTS). Residues 219–237 (KAGDDRKEDLDSKDSKDEQ) show a composition bias toward basic and acidic residues. The span at 243 to 253 (DLDDMEDEDCD) shows a compositional bias: acidic residues. The span at 254–264 (KLDSDCEKSGQ) shows a compositional bias: basic and acidic residues. The span at 310–321 (SKPQQQQPSPQS) shows a compositional bias: low complexity.

This sequence belongs to the TALE/IRO homeobox family.

The protein resides in the nucleus. Its function is as follows. Transcription factor. Binds to the iroquois binding site (IBS) motif of target genes to regulate gene expression; functions as a transcriptional activator or repressor. In concert with irx5a, plays a role in visual performance. The sequence is that of Iroquois homeobox protein 6a from Danio rerio (Zebrafish).